Reading from the N-terminus, the 319-residue chain is NAP1-binding protein (319 aa).

The segment covering 34 to 43 (SALRSRRKQM) has biased composition (basic residues). Residues 34 to 74 (SALRSRRKQMRPTGKSVLKRPRKVTDRKTEEKIRTNRRKTP) form a disordered region. Residues 56–67 (KVTDRKTEEKIR) show a composition bias toward basic and acidic residues. A phosphoserine mark is found at Ser-251 and Ser-260. Positions 278-319 (EMQPLQENISPACPTPPYRSRETEKEDETLSPISVDFSSYLS) are disordered.

As to quaternary structure, interacts with NDC1 and MPS2.

This chain is NAP1-binding protein (NBP1), found in Saccharomyces cerevisiae (strain ATCC 204508 / S288c) (Baker's yeast).